We begin with the raw amino-acid sequence, 279 residues long: Phosphatidylglycerol--prolipoprotein diacylglyceryl transferase (279 aa).

3 helical membrane passes run 18–38 (LSVR…YFVA), 55–75 (IIFY…VIFQ), and 89–109 (IWHG…AGVI). An a 1,2-diacyl-sn-glycero-3-phospho-(1'-sn-glycerol)-binding site is contributed by Arg-137. A run of 2 helical transmembrane segments spans residues 203-223 (LGET…FIEG) and 235-255 (IRVA…LIVY).

The protein belongs to the Lgt family.

It is found in the cell membrane. The enzyme catalyses L-cysteinyl-[prolipoprotein] + a 1,2-diacyl-sn-glycero-3-phospho-(1'-sn-glycerol) = an S-1,2-diacyl-sn-glyceryl-L-cysteinyl-[prolipoprotein] + sn-glycerol 1-phosphate + H(+). Its pathway is protein modification; lipoprotein biosynthesis (diacylglyceryl transfer). Its function is as follows. Catalyzes the transfer of the diacylglyceryl group from phosphatidylglycerol to the sulfhydryl group of the N-terminal cysteine of a prolipoprotein, the first step in the formation of mature lipoproteins. The protein is Phosphatidylglycerol--prolipoprotein diacylglyceryl transferase of Staphylococcus aureus (strain USA300).